We begin with the raw amino-acid sequence, 167 residues long: Small ribosomal subunit protein uS5 (167 aa).

One can recognise an S5 DRBM domain in the interval 12–75 (LQEKLVAVNR…EKARRNIVSV (64 aa)).

It belongs to the universal ribosomal protein uS5 family. In terms of assembly, part of the 30S ribosomal subunit. Contacts proteins S4 and S8.

Its function is as follows. With S4 and S12 plays an important role in translational accuracy. In terms of biological role, located at the back of the 30S subunit body where it stabilizes the conformation of the head with respect to the body. This is Small ribosomal subunit protein uS5 from Shewanella loihica (strain ATCC BAA-1088 / PV-4).